Consider the following 209-residue polypeptide: Ribosomal RNA large subunit methyltransferase E (209 aa).

The S-adenosyl-L-methionine site is built by Gly-63, Trp-65, Asp-83, Asp-99, and Asp-124. Lys-164 serves as the catalytic Proton acceptor.

This sequence belongs to the class I-like SAM-binding methyltransferase superfamily. RNA methyltransferase RlmE family.

It is found in the cytoplasm. It catalyses the reaction uridine(2552) in 23S rRNA + S-adenosyl-L-methionine = 2'-O-methyluridine(2552) in 23S rRNA + S-adenosyl-L-homocysteine + H(+). Specifically methylates the uridine in position 2552 of 23S rRNA at the 2'-O position of the ribose in the fully assembled 50S ribosomal subunit. This chain is Ribosomal RNA large subunit methyltransferase E, found in Baumannia cicadellinicola subsp. Homalodisca coagulata.